Consider the following 124-residue polypeptide: Kinocilin (124 aa).

2 consecutive transmembrane segments (helical) span residues 13–33 (LQLACVALGLVAGSIIIGVSV) and 40–60 (VGGIFLGAAGLGLLIFAYPFL). The interval 80-124 (PNSGPDHGEGRSSNNSNKEGARSGLSTVTRTLEKLKPGGRGTEEG) is disordered. Polar residues predominate over residues 90–109 (RSSNNSNKEGARSGLSTVTR). The segment covering 110-124 (TLEKLKPGGRGTEEG) has biased composition (basic and acidic residues).

As to expression, preferentially expressed in the inner ear and testis. Localizes mainly in the kinocilium of sensory cells in the inner ear. Also present in the manchette of the spermatids, a transient structure enriched in interconnected microtubules (at protein level).

Its subcellular location is the membrane. In terms of biological role, may play a role in stabilizing dense microtubular networks or in vesicular trafficking. In Mus musculus (Mouse), this protein is Kinocilin (Kncn).